Reading from the N-terminus, the 434-residue chain is Glutamate-1-semialdehyde 2,1-aminomutase (434 aa).

Lys-274 is subject to N6-(pyridoxal phosphate)lysine.

Belongs to the class-III pyridoxal-phosphate-dependent aminotransferase family. HemL subfamily. In terms of assembly, homodimer. It depends on pyridoxal 5'-phosphate as a cofactor.

The protein localises to the cytoplasm. The catalysed reaction is (S)-4-amino-5-oxopentanoate = 5-aminolevulinate. Its pathway is porphyrin-containing compound metabolism; protoporphyrin-IX biosynthesis; 5-aminolevulinate from L-glutamyl-tRNA(Glu): step 2/2. The chain is Glutamate-1-semialdehyde 2,1-aminomutase from Acidovorax sp. (strain JS42).